Consider the following 706-residue polypeptide: Centrosomal protein kizuna (706 aa).

A coiled-coil region spans residues 63 to 113; it reads QRAKTRNLELLGNVENLASKLKEFSIDCSRLLQKRMEYKNHITRLKKDRRK. Residues 105-116 are compositionally biased toward basic residues; the sequence is TRLKKDRRKMGS. Disordered regions lie at residues 105-184, 215-347, 571-603, 620-665, and 677-706; these read TRLK…LCMH, VREK…ASRG, EIKPARPSGTNAQTGEEQEIQSAEEDSADQSPV, SVAQ…KTKP, and ESDDSNSEIEMALRPQSCNTSSHDFDDFYD. Positions 118–127 are enriched in basic and acidic residues; that stretch reads GKSEADEHPS. Polar residues-rich tracts occupy residues 128-156 and 164-180; these read RLSTQGLSQSAAIFMGHQTSNGSSRNDGA and HTEQIPNHPSLPPSQSG. Residues 215 to 251 are compositionally biased toward basic and acidic residues; that stretch reads VREKQMESDWDISQRAREQQRQEELKSPHTTLKEAEV. Over residues 272–283 the composition is skewed to low complexity; sequence TRSPSPDTTDPS. Over residues 293–304 the composition is skewed to acidic residues; it reads GEDEEESAEDKD. Residues 308-320 show a composition bias toward polar residues; sequence PINQNHSDYTSNI. Over residues 586-598 the composition is skewed to acidic residues; that stretch reads EEQEIQSAEEDSA. Over residues 638-648 the composition is skewed to basic and acidic residues; the sequence is PDAHKLEKPEV.

The protein belongs to the kizuna family.

It is found in the cytoplasm. It localises to the cytoskeleton. Its subcellular location is the microtubule organizing center. The protein localises to the centrosome. The protein resides in the cilium basal body. Functionally, centrosomal protein required for establishing a robust mitotic centrosome architecture that can endure the forces that converge on the centrosomes during spindle formation. Required for stabilizing the expanded pericentriolar material around the centriole. This chain is Centrosomal protein kizuna (kiz), found in Danio rerio (Zebrafish).